Consider the following 370-residue polypeptide: GTPase Obg (370 aa).

Residues 1–159 (MKFIDEARIE…RMLRLELKVL (159 aa)) form the Obg domain. Residues 127–146 (NLHFKSSTNRAPRQKTDGKP) are disordered. The region spanning 160-334 (ADVGLLGMPN…LCYAIYDYLA (175 aa)) is the OBG-type G domain. GTP-binding positions include 166 to 173 (GMPNAGKS), 191 to 195 (FTTLA), 213 to 216 (DIPG), 284 to 287 (NKLD), and 315 to 317 (SAL). The Mg(2+) site is built by serine 173 and threonine 193. The tract at residues 350 to 370 (ADVRFRDAPPSDGGATSGGDA) is disordered.

Belongs to the TRAFAC class OBG-HflX-like GTPase superfamily. OBG GTPase family. In terms of assembly, monomer. Requires Mg(2+) as cofactor.

The protein resides in the cytoplasm. An essential GTPase which binds GTP, GDP and possibly (p)ppGpp with moderate affinity, with high nucleotide exchange rates and a fairly low GTP hydrolysis rate. Plays a role in control of the cell cycle, stress response, ribosome biogenesis and in those bacteria that undergo differentiation, in morphogenesis control. The protein is GTPase Obg of Burkholderia vietnamiensis (strain G4 / LMG 22486) (Burkholderia cepacia (strain R1808)).